The chain runs to 243 residues: Probable 6-oxopurine nucleoside phosphorylase (243 aa).

Residues T8 and 48–49 (RH) contribute to the phosphate site. M174 provides a ligand contact to substrate. Phosphate is bound at residue T175. Position 198 to 200 (198 to 200 (NYA)) interacts with substrate.

It belongs to the PNP/MTAP phosphorylase family. MTAP subfamily. As to quaternary structure, homohexamer. Dimer of a homotrimer.

It carries out the reaction a purine D-ribonucleoside + phosphate = a purine nucleobase + alpha-D-ribose 1-phosphate. Its pathway is purine metabolism; purine nucleoside salvage. In terms of biological role, purine nucleoside phosphorylase which is highly specific for 6-oxopurine nucleosides. Cleaves guanosine or inosine to respective bases and sugar-1-phosphate molecules. Involved in purine salvage. This is Probable 6-oxopurine nucleoside phosphorylase from Archaeoglobus fulgidus (strain ATCC 49558 / DSM 4304 / JCM 9628 / NBRC 100126 / VC-16).